A 166-amino-acid chain; its full sequence is MLVIHTRIAPQAAADAELELTFEARRKSRLRCFTTAGEEVGLFLERGQPALADGEFLQAKDGRIVRVRAKAEPLLHVTCASPFELMRAAYHLGNRHVALQLGDGWLRLPDDYVLKAMLEQLGATVEAVQAPYQPEQGAYGGGHHHSHHGDEEFNYGPRLHQFGVRK.

The tract at residues 135–156 (EQGAYGGGHHHSHHGDEEFNYG) is disordered.

Belongs to the UreE family.

It localises to the cytoplasm. In terms of biological role, involved in urease metallocenter assembly. Binds nickel. Probably functions as a nickel donor during metallocenter assembly. This chain is Urease accessory protein UreE, found in Ectopseudomonas mendocina (strain ymp) (Pseudomonas mendocina).